Reading from the N-terminus, the 434-residue chain is Nuclear receptor subfamily 1 group I member 2 (434 aa).

The segment at residues 38–107 (PQICRVCGDK…RLRKCLESGM (70 aa)) is a DNA-binding region (nuclear receptor). NR C4-type zinc fingers lie at residues 41 to 61 (CRVC…CEGC) and 77 to 102 (CPFR…LRKC). The Bipartite nuclear localization signal motif lies at 66-92 (RRAMKRNARLRCPFRKGACEITRKTRR). The interval 108 to 145 (KKEMIMSDEAVEERRALIKRKKSERTGTQPLGVQGLTE) is hinge. The NR LBD domain occupies 146–433 (EQRMMIRELM…LMQELFGITG (288 aa)). Hyperforin-binding positions include S247, 285 to 288 (QLRF), and H407.

This sequence belongs to the nuclear hormone receptor family. NR1 subfamily. As to quaternary structure, heterodimer with RXR. Interacts with NCOA1. Interacts (via domain NR LBD) with CRY1 and CRY2 in a ligand-dependent manner. As to expression, expressed in liver, colon and small intestine.

Its subcellular location is the nucleus. Nuclear receptor that binds and is activated by variety of endogenous and xenobiotic compounds. Transcription factor that activates the transcription of multiple genes involved in the metabolism and secretion of potentially harmful xenobiotics, drugs and endogenous compounds. Activated by the antibiotic rifampicin and various plant metabolites, such as hyperforin, guggulipid, colupulone, and isoflavones. Response to specific ligands is species-specific. Activated by naturally occurring steroids, such as pregnenolone and progesterone. Binds to a response element in the promoters of the CYP3A4 and ABCB1/MDR1 genes. In Homo sapiens (Human), this protein is Nuclear receptor subfamily 1 group I member 2 (NR1I2).